A 156-amino-acid polypeptide reads, in one-letter code: MTVQNDNRPLLRLVRLANGADLELPSYETRGAAGMDLRAAVPADEPLNLQPGERALVPTGFIFEVPQGYEAQIRPRSGLAIKNGITCLNSPGTVDSDYRGEVKVILANLGQDDFTIERGMRIAQMVIAPVTQVTVSEVTETSETARGAGGFGSTGV.

Substrate-binding positions include 76 to 78 (RSG), Asn-89, 93 to 95 (TVD), and Lys-103.

The protein belongs to the dUTPase family. Mg(2+) serves as cofactor.

The enzyme catalyses dUTP + H2O = dUMP + diphosphate + H(+). It participates in pyrimidine metabolism; dUMP biosynthesis; dUMP from dCTP (dUTP route): step 2/2. In terms of biological role, this enzyme is involved in nucleotide metabolism: it produces dUMP, the immediate precursor of thymidine nucleotides and it decreases the intracellular concentration of dUTP so that uracil cannot be incorporated into DNA. The chain is Deoxyuridine 5'-triphosphate nucleotidohydrolase from Agrobacterium fabrum (strain C58 / ATCC 33970) (Agrobacterium tumefaciens (strain C58)).